The sequence spans 173 residues: Transcription factor E (173 aa).

Residues 6–89 (PLEELLEFVR…YWYVDRETLN (84 aa)) enclose the HTH TFE/IIEalpha-type domain.

This sequence belongs to the TFE family. As to quaternary structure, monomer. Interaction with RNA polymerase subunits RpoF and RpoE is necessary for Tfe stimulatory transcription activity. Able to interact with Tbp and RNA polymerase in the absence of DNA promoter. Interacts both with the preinitiation and elongation complexes.

In terms of biological role, transcription factor that plays a role in the activation of archaeal genes transcribed by RNA polymerase. Facilitates transcription initiation by enhancing TATA-box recognition by TATA-box-binding protein (Tbp), and transcription factor B (Tfb) and RNA polymerase recruitment. Not absolutely required for transcription in vitro, but particularly important in cases where Tbp or Tfb function is not optimal. It dynamically alters the nucleic acid-binding properties of RNA polymerases by stabilizing the initiation complex and destabilizing elongation complexes. Seems to translocate with the RNA polymerase following initiation and acts by binding to the non template strand of the transcription bubble in elongation complexes. This is Transcription factor E from Ignicoccus hospitalis (strain KIN4/I / DSM 18386 / JCM 14125).